The chain runs to 222 residues: 3-dehydroquinate dehydratase (222 aa).

Residues 29–31 and Arg55 each bind 3-dehydroquinate; that span reads ELR. His112 acts as the Proton donor/acceptor in catalysis. Residue Lys139 is the Schiff-base intermediate with substrate of the active site. The 3-dehydroquinate site is built by Arg178, Ser199, and Gln203.

It belongs to the type-I 3-dehydroquinase family. In terms of assembly, homodimer.

It carries out the reaction 3-dehydroquinate = 3-dehydroshikimate + H2O. It functions in the pathway metabolic intermediate biosynthesis; chorismate biosynthesis; chorismate from D-erythrose 4-phosphate and phosphoenolpyruvate: step 3/7. Its function is as follows. Involved in the third step of the chorismate pathway, which leads to the biosynthesis of aromatic amino acids. Catalyzes the cis-dehydration of 3-dehydroquinate (DHQ) and introduces the first double bond of the aromatic ring to yield 3-dehydroshikimate. The polypeptide is 3-dehydroquinate dehydratase (Dehalococcoides mccartyi (strain ATCC BAA-2100 / JCM 16839 / KCTC 5957 / BAV1)).